A 133-amino-acid chain; its full sequence is Small ribosomal subunit protein uS8 (133 aa).

The protein belongs to the universal ribosomal protein uS8 family. Part of the 30S ribosomal subunit. Contacts proteins S5 and S12.

In terms of biological role, one of the primary rRNA binding proteins, it binds directly to 16S rRNA central domain where it helps coordinate assembly of the platform of the 30S subunit. The protein is Small ribosomal subunit protein uS8 of Prochlorococcus marinus (strain SARG / CCMP1375 / SS120).